The following is a 482-amino-acid chain: Rho GTPase-activating protein 15 (482 aa).

Phosphoserine occurs at positions 51, 111, 205, 208, and 250. One can recognise a PH domain in the interval 87–198 (MVEKEGYLQK…WFHAIKNAID (112 aa)). Positions 288 to 477 (SHLHTVCERE…FMLTEYDKIF (190 aa)) constitute a Rho-GAP domain.

It is found in the cytoplasm. The protein localises to the membrane. Functionally, GTPase activator for the Rho-type GTPases by converting them to an inactive GDP-bound state. Has activity toward RAC1. Overexpression results in an increase in actin stress fibers and cell contraction. This is Rho GTPase-activating protein 15 (Arhgap15) from Rattus norvegicus (Rat).